Consider the following 142-residue polypeptide: Small heat shock protein IbpB (142 aa).

Positions 26–137 (SGESQSFPPY…APQRIAINER (112 aa)) constitute a sHSP domain.

Belongs to the small heat shock protein (HSP20) family. Homodimer. Forms homomultimers of about 100-150 subunits at optimal growth temperatures. Conformation changes to oligomers at high temperatures or high ionic concentrations. The decrease in size of the multimers is accompanied by an increase in chaperone activity.

Its subcellular location is the cytoplasm. Associates with aggregated proteins, together with IbpA, to stabilize and protect them from irreversible denaturation and extensive proteolysis during heat shock and oxidative stress. Aggregated proteins bound to the IbpAB complex are more efficiently refolded and reactivated by the ATP-dependent chaperone systems ClpB and DnaK/DnaJ/GrpE. Its activity is ATP-independent. The chain is Small heat shock protein IbpB from Salmonella newport (strain SL254).